Consider the following 318-residue polypeptide: NADH-ubiquinone oxidoreductase chain 1 (318 aa).

8 helical membrane-spanning segments follow: residues 2 to 22 (PMINLLLLIMSILIAMAFLML), 76 to 96 (ALALTIALLLWTPLPMPIPLI), 100 to 120 (LGLLFILAASSLTVYSILWSG), 146 to 166 (LALILLSVLLMSGSFNLSALI), 171 to 191 (HSWLLLPSWPLALMWFISTLA), 222 to 242 (LFFMAEYTNIILMNALTTMIF), 253 to 273 (ELYTTLFTIKTLLLTSLFLWI), and 294 to 314 (LPLTLALLMWHISVPIATSGI).

The protein belongs to the complex I subunit 1 family. As to quaternary structure, core subunit of respiratory chain NADH dehydrogenase (Complex I) which is composed of 45 different subunits.

The protein resides in the mitochondrion inner membrane. It carries out the reaction a ubiquinone + NADH + 5 H(+)(in) = a ubiquinol + NAD(+) + 4 H(+)(out). Functionally, core subunit of the mitochondrial membrane respiratory chain NADH dehydrogenase (Complex I) which catalyzes electron transfer from NADH through the respiratory chain, using ubiquinone as an electron acceptor. Essential for the catalytic activity and assembly of complex I. This is NADH-ubiquinone oxidoreductase chain 1 (MT-ND1) from Pongo abelii (Sumatran orangutan).